The chain runs to 357 residues: tRNA/tmRNA (uracil-C(5))-methyltransferase (357 aa).

Residues Q185, Y212, N217, E233, and D291 each coordinate S-adenosyl-L-methionine. Catalysis depends on C316, which acts as the Nucleophile. E350 functions as the Proton acceptor in the catalytic mechanism.

This sequence belongs to the class I-like SAM-binding methyltransferase superfamily. RNA M5U methyltransferase family. TrmA subfamily.

The enzyme catalyses uridine(54) in tRNA + S-adenosyl-L-methionine = 5-methyluridine(54) in tRNA + S-adenosyl-L-homocysteine + H(+). It carries out the reaction uridine(341) in tmRNA + S-adenosyl-L-methionine = 5-methyluridine(341) in tmRNA + S-adenosyl-L-homocysteine + H(+). Dual-specificity methyltransferase that catalyzes the formation of 5-methyluridine at position 54 (m5U54) in all tRNAs, and that of position 341 (m5U341) in tmRNA (transfer-mRNA). This is tRNA/tmRNA (uracil-C(5))-methyltransferase from Campylobacter hominis (strain ATCC BAA-381 / DSM 21671 / CCUG 45161 / LMG 19568 / NCTC 13146 / CH001A).